A 246-amino-acid polypeptide reads, in one-letter code: Probable transcriptional regulatory protein CLL_A1008 (246 aa).

This sequence belongs to the TACO1 family.

The protein resides in the cytoplasm. In Clostridium botulinum (strain Eklund 17B / Type B), this protein is Probable transcriptional regulatory protein CLL_A1008.